An 875-amino-acid chain; its full sequence is Kelch-like protein 29 (875 aa).

Residues 113–126 (IRWGQTPVNQSTPW) show a composition bias toward polar residues. Disordered stretches follow at residues 113-145 (IRWG…PGTG) and 240-291 (GVGQ…DSAH). Residues 131 to 140 (PPSKQMRESD) are compositionally biased toward basic and acidic residues. Low complexity predominate over residues 270 to 280 (PSAALPSSVPA). A BTB domain is found at 329–401 (TDLKIVVEGR…VYTGSLVIDS (73 aa)). Kelch repeat units follow at residues 585–635 (VIVL…VSAG), 637–683 (NIYL…VYDG), 684–730 (KIYT…VCGG), 732–778 (IYVF…TLNG), 779–821 (FVFI…VLDG), and 822–870 (KIYA…VIKK).

The chain is Kelch-like protein 29 (Klhl29) from Mus musculus (Mouse).